The following is a 415-amino-acid chain: Serine hydroxymethyltransferase 3 (415 aa).

(6S)-5,6,7,8-tetrahydrofolate contacts are provided by residues L122 and 126–128 (GHL). At K230 the chain carries N6-(pyridoxal phosphate)lysine.

Belongs to the SHMT family. As to quaternary structure, homodimer. The cofactor is pyridoxal 5'-phosphate.

It is found in the cytoplasm. The enzyme catalyses (6R)-5,10-methylene-5,6,7,8-tetrahydrofolate + glycine + H2O = (6S)-5,6,7,8-tetrahydrofolate + L-serine. It participates in one-carbon metabolism; tetrahydrofolate interconversion. Its pathway is amino-acid biosynthesis; glycine biosynthesis; glycine from L-serine: step 1/1. In terms of biological role, catalyzes the reversible interconversion of serine and glycine with tetrahydrofolate (THF) serving as the one-carbon carrier. This reaction serves as the major source of one-carbon groups required for the biosynthesis of purines, thymidylate, methionine, and other important biomolecules. Also exhibits THF-independent aldolase activity toward beta-hydroxyamino acids, producing glycine and aldehydes, via a retro-aldol mechanism. The polypeptide is Serine hydroxymethyltransferase 3 (Burkholderia lata (strain ATCC 17760 / DSM 23089 / LMG 22485 / NCIMB 9086 / R18194 / 383)).